Here is a 444-residue protein sequence, read N- to C-terminus: Methylenetetrahydrofolate--tRNA-(uracil-5-)-methyltransferase TrmFO (444 aa).

FAD is bound at residue 9–14 (GAGMAG).

Belongs to the MnmG family. TrmFO subfamily. Requires FAD as cofactor.

It localises to the cytoplasm. The enzyme catalyses uridine(54) in tRNA + (6R)-5,10-methylene-5,6,7,8-tetrahydrofolate + NADH + H(+) = 5-methyluridine(54) in tRNA + (6S)-5,6,7,8-tetrahydrofolate + NAD(+). It catalyses the reaction uridine(54) in tRNA + (6R)-5,10-methylene-5,6,7,8-tetrahydrofolate + NADPH + H(+) = 5-methyluridine(54) in tRNA + (6S)-5,6,7,8-tetrahydrofolate + NADP(+). In terms of biological role, catalyzes the folate-dependent formation of 5-methyl-uridine at position 54 (M-5-U54) in all tRNAs. This is Methylenetetrahydrofolate--tRNA-(uracil-5-)-methyltransferase TrmFO from Cereibacter sphaeroides (strain ATCC 17023 / DSM 158 / JCM 6121 / CCUG 31486 / LMG 2827 / NBRC 12203 / NCIMB 8253 / ATH 2.4.1.) (Rhodobacter sphaeroides).